The primary structure comprises 186 residues: uncharacterized protein (186 aa).

A signal peptide spans 1–21 (MIHVKYIILGFIMVSSLNLYA).

This is an uncharacterized protein from Rickettsia conorii (strain ATCC VR-613 / Malish 7).